A 33-amino-acid polypeptide reads, in one-letter code: uncharacterized protein (33 aa).

Positions 1–24 are disordered; it reads MRTGTRCDLGELSHPRKTLPPRGM.

This is an uncharacterized protein from Treponema pallidum (strain Nichols).